A 168-amino-acid chain; its full sequence is Transcription antitermination protein NusB (168 aa).

This sequence belongs to the NusB family.

Functionally, involved in transcription antitermination. Required for transcription of ribosomal RNA (rRNA) genes. Binds specifically to the boxA antiterminator sequence of the ribosomal RNA (rrn) operons. This is Transcription antitermination protein NusB from Brucella anthropi (strain ATCC 49188 / DSM 6882 / CCUG 24695 / JCM 21032 / LMG 3331 / NBRC 15819 / NCTC 12168 / Alc 37) (Ochrobactrum anthropi).